The primary structure comprises 392 residues: Formate-dependent phosphoribosylglycinamide formyltransferase (392 aa).

N(1)-(5-phospho-beta-D-ribosyl)glycinamide contacts are provided by residues 22 to 23 (EL) and E82. Residues R114, K155, 160–165 (SSGKGQ), 195–198 (EGVV), and E203 contribute to the ATP site. The 190-residue stretch at 119–308 (RLAAEELGLP…EFALHVRAFL (190 aa)) folds into the ATP-grasp domain. Residues E267 and E279 each coordinate Mg(2+). N(1)-(5-phospho-beta-D-ribosyl)glycinamide contacts are provided by residues D286, K355, and 362 to 363 (RR).

Belongs to the PurK/PurT family. As to quaternary structure, homodimer.

The catalysed reaction is N(1)-(5-phospho-beta-D-ribosyl)glycinamide + formate + ATP = N(2)-formyl-N(1)-(5-phospho-beta-D-ribosyl)glycinamide + ADP + phosphate + H(+). It functions in the pathway purine metabolism; IMP biosynthesis via de novo pathway; N(2)-formyl-N(1)-(5-phospho-D-ribosyl)glycinamide from N(1)-(5-phospho-D-ribosyl)glycinamide (formate route): step 1/1. In terms of biological role, involved in the de novo purine biosynthesis. Catalyzes the transfer of formate to 5-phospho-ribosyl-glycinamide (GAR), producing 5-phospho-ribosyl-N-formylglycinamide (FGAR). Formate is provided by PurU via hydrolysis of 10-formyl-tetrahydrofolate. The polypeptide is Formate-dependent phosphoribosylglycinamide formyltransferase (Salmonella paratyphi A (strain ATCC 9150 / SARB42)).